Consider the following 155-residue polypeptide: Transcription antitermination protein NusB (155 aa).

The protein belongs to the NusB family.

Functionally, involved in transcription antitermination. Required for transcription of ribosomal RNA (rRNA) genes. Binds specifically to the boxA antiterminator sequence of the ribosomal RNA (rrn) operons. In Vibrio atlanticus (strain LGP32) (Vibrio splendidus (strain Mel32)), this protein is Transcription antitermination protein NusB.